Here is a 77-residue protein sequence, read N- to C-terminus: Fungal protease inhibitor F (77 aa).

Residues 1–22 (MASKNLFVLFFIFALFAANIAA) form the signal peptide. Intrachain disulfides connect cysteine 25–cysteine 57, cysteine 36–cysteine 49, cysteine 40–cysteine 77, and cysteine 59–cysteine 71.

It belongs to the protease inhibitor I40 family. As to expression, hemolymph.

It is found in the secreted. Its function is as follows. Highly specific for fungal protease and subtilisin. The chain is Fungal protease inhibitor F from Bombyx mori (Silk moth).